The primary structure comprises 484 residues: tRNA sulfurtransferase (484 aa).

One can recognise a THUMP domain in the interval 63–167 (QAFGERLACI…GDKLYMVTKR (105 aa)). ATP is bound by residues 185 to 186 (LI), Lys-267, Gly-289, and Gln-298. Cysteines 346 and 458 form a disulfide. The region spanning 406-484 (IDTNEVVIDI…GYHNVKVYRP (79 aa)) is the Rhodanese domain. Catalysis depends on Cys-458, which acts as the Cysteine persulfide intermediate.

It belongs to the ThiI family.

Its subcellular location is the cytoplasm. The catalysed reaction is [ThiI sulfur-carrier protein]-S-sulfanyl-L-cysteine + a uridine in tRNA + 2 reduced [2Fe-2S]-[ferredoxin] + ATP + H(+) = [ThiI sulfur-carrier protein]-L-cysteine + a 4-thiouridine in tRNA + 2 oxidized [2Fe-2S]-[ferredoxin] + AMP + diphosphate. It catalyses the reaction [ThiS sulfur-carrier protein]-C-terminal Gly-Gly-AMP + S-sulfanyl-L-cysteinyl-[cysteine desulfurase] + AH2 = [ThiS sulfur-carrier protein]-C-terminal-Gly-aminoethanethioate + L-cysteinyl-[cysteine desulfurase] + A + AMP + 2 H(+). It participates in cofactor biosynthesis; thiamine diphosphate biosynthesis. Catalyzes the ATP-dependent transfer of a sulfur to tRNA to produce 4-thiouridine in position 8 of tRNAs, which functions as a near-UV photosensor. Also catalyzes the transfer of sulfur to the sulfur carrier protein ThiS, forming ThiS-thiocarboxylate. This is a step in the synthesis of thiazole, in the thiamine biosynthesis pathway. The sulfur is donated as persulfide by IscS. This Shewanella sp. (strain ANA-3) protein is tRNA sulfurtransferase.